We begin with the raw amino-acid sequence, 510 residues long: Probable cytochrome P450 4d20 (510 aa).

Cys-455 is a heme binding site.

This sequence belongs to the cytochrome P450 family. Heme is required as a cofactor.

The protein localises to the endoplasmic reticulum membrane. The protein resides in the microsome membrane. May be involved in the metabolism of insect hormones and in the breakdown of synthetic insecticides. The sequence is that of Probable cytochrome P450 4d20 (Cyp4d20) from Drosophila melanogaster (Fruit fly).